A 104-amino-acid chain; its full sequence is Large ribosomal subunit protein uL24 (104 aa).

The protein belongs to the universal ribosomal protein uL24 family. As to quaternary structure, part of the 50S ribosomal subunit.

One of two assembly initiator proteins, it binds directly to the 5'-end of the 23S rRNA, where it nucleates assembly of the 50S subunit. In terms of biological role, one of the proteins that surrounds the polypeptide exit tunnel on the outside of the subunit. This Flavobacterium psychrophilum (strain ATCC 49511 / DSM 21280 / CIP 103535 / JIP02/86) protein is Large ribosomal subunit protein uL24.